The chain runs to 506 residues: MKEYQVYLERARSRQQDFLYPLIFREYIYGLAYSHNWNRSIFVENGGYDNKYSLLNVKRLITRMYQQNHLIISANDSNKNPFLGYNKNFYSKIISEGFAIVVEIPLFLQLSSSLEEAEIIKSYKNVRSIHSIFPFLEDKFTYLNYVSDIRIPYPIHLEILVQILRYWVKDAPFFHLLRLFLYHFCNWNRFITTKKSISTFSKSNPRLFLFLYNFYVCEYESIFLFLRNKSSHLRFKSFSVFLERIFFYAKREHLVEVFSKDFSYPLPFFKDPNIHYVRYQGKCILASKNVPFLMNKWKHYFIHLWQCFFDVWSQPRTININQLSEHSFQLLGYFSNVRLNRSVVRSQMLQNTFLIEIVSKKLDIIVPIIPLIRSLAKAKFCNVLGHPISKPVWADSSDFDIMERFLRICRNLSHYYNGSSKKKSLYRIKYILRLSCIKTLACKHKSTTRAFLKRSGSEELLEEFFTEEEEILSLIFPRDSFTLRRFYRNRIWYLDILFRNDLVNDE.

This sequence belongs to the intron maturase 2 family. MatK subfamily.

It localises to the plastid. Its subcellular location is the chloroplast. In terms of biological role, usually encoded in the trnK tRNA gene intron. Probably assists in splicing its own and other chloroplast group II introns. This Trifolium subterraneum (Subterranean clover) protein is Maturase K.